The following is a 371-amino-acid chain: Protein-tyrosine sulfotransferase 2 (371 aa).

The Cytoplasmic portion of the chain corresponds to 1–8 (MRVTMRRV). The chain crosses the membrane as a helical; Signal-anchor for type II membrane protein span at residues 9-25 (LLAVGSVVALMVTLHLG). Residues 26-371 (QQVLECQHVL…QVTQNTSSSH (346 aa)) are Lumenal-facing. Residue 76–80 (RSGTT) coordinates 3'-phosphoadenylyl sulfate. An intrachain disulfide couples C94 to C154. E97 functions as the Proton donor/acceptor in the catalytic mechanism. An interaction with peptide substrate region spans residues 99–103 (RIIPR). Residues R181, S189, and R193 each contribute to the 3'-phosphoadenylyl sulfate site. Residues C223 and C231 are joined by a disulfide bond. 3'-phosphoadenylyl sulfate-binding positions include Y236, 283–292 (STDQVIKPVN), and K298. Residues N341 and N366 are each glycosylated (N-linked (GlcNAc...) asparagine).

The protein belongs to the protein sulfotransferase family.

Its subcellular location is the golgi apparatus membrane. It catalyses the reaction L-tyrosyl-[protein] + 3'-phosphoadenylyl sulfate = O-sulfo-L-tyrosine-[protein] + adenosine 3',5'-bisphosphate + H(+). Its function is as follows. Catalyzes the O-sulfation of tyrosine residues within acidic motifs of polypeptides, using 3'-phosphoadenylyl sulfate (PAPS) as cosubstrate. This Gallus gallus (Chicken) protein is Protein-tyrosine sulfotransferase 2 (TPST2).